The sequence spans 175 residues: MSIDDLKSKIPDFAKDVRLNLSSMASDETLTPQQKYGLFVACGIASRNADVRKALVAEAAGKVDASVIQAAKAAASIMGMNNVYYRFVHLASNKDYRTMPARLRMNVISNPGVDKVDFELWSLAVSAINGCGMCIDAHEDVLRKANVTAEAIQAAVRFASIIQSAAIALEAADTE.

The active-site Proton donor is C131. An intrachain disulfide couples C131 to C134. The active-site Cysteine sulfenic acid (-SOH) intermediate is C134.

Belongs to the AhpD family.

The enzyme catalyses N(6)-[(R)-dihydrolipoyl]-L-lysyl-[lipoyl-carrier protein] + a hydroperoxide = N(6)-[(R)-lipoyl]-L-lysyl-[lipoyl-carrier protein] + an alcohol + H2O. Functionally, antioxidant protein with alkyl hydroperoxidase activity. Required for the reduction of the AhpC active site cysteine residues and for the regeneration of the AhpC enzyme activity. This is Alkyl hydroperoxide reductase AhpD from Brucella melitensis biotype 1 (strain ATCC 23456 / CCUG 17765 / NCTC 10094 / 16M).